Consider the following 375-residue polypeptide: tRNA-specific 2-thiouridylase MnmA (375 aa).

ATP contacts are provided by residues 8-15 (GLSGGVDS) and M34. Residues 104 to 106 (NPD) form an interaction with target base in tRNA region. C109 functions as the Nucleophile in the catalytic mechanism. C109 and C208 are oxidised to a cystine. ATP is bound at residue G134. The interaction with tRNA stretch occupies residues 158–160 (KDQ). The active-site Cysteine persulfide intermediate is C208. The tract at residues 321 to 322 (RY) is interaction with tRNA.

It belongs to the MnmA/TRMU family.

The protein resides in the cytoplasm. The catalysed reaction is S-sulfanyl-L-cysteinyl-[protein] + uridine(34) in tRNA + AH2 + ATP = 2-thiouridine(34) in tRNA + L-cysteinyl-[protein] + A + AMP + diphosphate + H(+). In terms of biological role, catalyzes the 2-thiolation of uridine at the wobble position (U34) of tRNA, leading to the formation of s(2)U34. This is tRNA-specific 2-thiouridylase MnmA from Mycoplasma mycoides subsp. mycoides SC (strain CCUG 32753 / NCTC 10114 / PG1).